Consider the following 170-residue polypeptide: Ribosome maturation factor RimM (170 aa).

The 73-residue stretch at 98–170 (PDEYYWVDLE…LIVVDWDPDF (73 aa)) folds into the PRC barrel domain.

This sequence belongs to the RimM family. As to quaternary structure, binds ribosomal protein uS19.

Its subcellular location is the cytoplasm. An accessory protein needed during the final step in the assembly of 30S ribosomal subunit, possibly for assembly of the head region. Essential for efficient processing of 16S rRNA. May be needed both before and after RbfA during the maturation of 16S rRNA. It has affinity for free ribosomal 30S subunits but not for 70S ribosomes. This Xanthomonas campestris pv. campestris (strain 8004) protein is Ribosome maturation factor RimM.